A 407-amino-acid chain; its full sequence is Argininosuccinate synthase (407 aa).

8 to 16 (AYSGGLDTT) is a binding site for ATP. L-citrulline-binding residues include Tyr-86 and Ser-91. Gly-116 contacts ATP. L-aspartate-binding residues include Thr-118, Asn-122, and Asp-123. Asn-122 provides a ligand contact to L-citrulline. L-citrulline-binding residues include Arg-126, Ser-178, Ser-187, Glu-264, and Tyr-276.

The protein belongs to the argininosuccinate synthase family. Type 1 subfamily. Homotetramer.

The protein localises to the cytoplasm. It carries out the reaction L-citrulline + L-aspartate + ATP = 2-(N(omega)-L-arginino)succinate + AMP + diphosphate + H(+). It functions in the pathway amino-acid biosynthesis; L-arginine biosynthesis; L-arginine from L-ornithine and carbamoyl phosphate: step 2/3. This chain is Argininosuccinate synthase, found in Lachnoclostridium phytofermentans (strain ATCC 700394 / DSM 18823 / ISDg) (Clostridium phytofermentans).